A 935-amino-acid polypeptide reads, in one-letter code: Protocadherin gamma-A11 (935 aa).

Positions 1–29 are cleaved as a signal peptide; sequence MANRLQRGDRSRLLLLLCIFLGTLRGFRA. 6 Cadherin domains span residues 30 to 134, 135 to 243, 244 to 348, 349 to 453, 454 to 563, and 571 to 677; these read RQIR…APSF, QEDE…IPMF, TQSV…APEI, TITS…PPVF, PHSS…APEI, and DGST…ADLG. Topologically, residues 30 to 693 are extracellular; the sequence is RQIRYSVPEE…NSEASDLSLY (664 aa). Asparagine 48 carries N-linked (GlcNAc...) asparagine glycosylation. Asparagine 255, asparagine 266, asparagine 420, and asparagine 546 each carry an N-linked (GlcNAc...) asparagine glycan. Residues 694–714 traverse the membrane as a helical segment; it reads LVVAVAAVSCIFLVFVIVLLA. Residues 715–935 are Cytoplasmic-facing; sequence LRLWRWHKSR…KKKSGKKEKK (221 aa). Disordered stretches follow at residues 805-844 and 905-935; these read CDPTSNQQAPPNTDWRFSQAQRPGTSGSQNGDDTGTWPNN and ATLTNAAGKRDGKAPAGGNGNKKKSGKKEKK. Over residues 807–844 the composition is skewed to polar residues; that stretch reads PTSNQQAPPNTDWRFSQAQRPGTSGSQNGDDTGTWPNN. Basic residues predominate over residues 925-935; that stretch reads NKKKSGKKEKK.

The protein localises to the cell membrane. In terms of biological role, potential calcium-dependent cell-adhesion protein. May be involved in the establishment and maintenance of specific neuronal connections in the brain. The sequence is that of Protocadherin gamma-A11 (PCDHGA11) from Pan troglodytes (Chimpanzee).